The following is a 172-amino-acid chain: Keratin-associated protein 13-3 (172 aa).

Tandem repeats lie at residues 46-55 (CQLGSSLYRG), 56-65 (CQETCWRPNS), 66-75 (CQTLCVESSP), 76-85 (CHTSCYYPRT), and 92-101 (CLTMHVGSRG). The interval 46 to 101 (CQLGSSLYRGCQETCWRPNSCQTLCVESSPCHTSCYYPRTHMLCNSCLTMHVGSRG) is 5 X 10 AA approximate repeats.

Belongs to the PMG family. In terms of assembly, interacts with hair keratins.

Functionally, in the hair cortex, hair keratin intermediate filaments are embedded in an interfilamentous matrix, consisting of hair keratin-associated proteins (KRTAP), which are essential for the formation of a rigid and resistant hair shaft through their extensive disulfide bond cross-linking with abundant cysteine residues of hair keratins. The matrix proteins include the high-sulfur and high-glycine-tyrosine keratins. This is Keratin-associated protein 13-3 (KRTAP13-3) from Homo sapiens (Human).